Here is a 386-residue protein sequence, read N- to C-terminus: Caspase-12 (386 aa).

Residues 1–91 (MAGKRQSQDP…LLSLKSHAEN (91 aa)) form the CARD domain. Ser-84 carries the phosphoserine modification. Catalysis depends on residues His-218 and Cys-266.

It belongs to the peptidase C14A family. Heterotetramer that consists of two anti-parallel arranged heterodimers, each one formed by two subunits (Potential). May interact with TRAF2.

In terms of biological role, involved in the activation cascade of caspases responsible for apoptosis execution. This is Caspase-12 from Canis lupus familiaris (Dog).